Here is a 329-residue protein sequence, read N- to C-terminus: 4-hydroxy-3-methylbut-2-enyl diphosphate reductase 1 (329 aa).

C29 contacts [4Fe-4S] cluster. Positions 58 and 95 each coordinate (2E)-4-hydroxy-3-methylbut-2-enyl diphosphate. Dimethylallyl diphosphate is bound by residues H58 and H95. Isopentenyl diphosphate is bound by residues H58 and H95. C117 contributes to the [4Fe-4S] cluster binding site. H145 provides a ligand contact to (2E)-4-hydroxy-3-methylbut-2-enyl diphosphate. H145 contacts dimethylallyl diphosphate. Position 145 (H145) interacts with isopentenyl diphosphate. The active-site Proton donor is the E147. T185 contacts (2E)-4-hydroxy-3-methylbut-2-enyl diphosphate. Position 215 (C215) interacts with [4Fe-4S] cluster. (2E)-4-hydroxy-3-methylbut-2-enyl diphosphate is bound by residues S243, S244, N245, and S287. S243, S244, N245, and S287 together coordinate dimethylallyl diphosphate. The isopentenyl diphosphate site is built by S243, S244, N245, and S287.

The protein belongs to the IspH family. [4Fe-4S] cluster is required as a cofactor.

It catalyses the reaction isopentenyl diphosphate + 2 oxidized [2Fe-2S]-[ferredoxin] + H2O = (2E)-4-hydroxy-3-methylbut-2-enyl diphosphate + 2 reduced [2Fe-2S]-[ferredoxin] + 2 H(+). The catalysed reaction is dimethylallyl diphosphate + 2 oxidized [2Fe-2S]-[ferredoxin] + H2O = (2E)-4-hydroxy-3-methylbut-2-enyl diphosphate + 2 reduced [2Fe-2S]-[ferredoxin] + 2 H(+). It participates in isoprenoid biosynthesis; dimethylallyl diphosphate biosynthesis; dimethylallyl diphosphate from (2E)-4-hydroxy-3-methylbutenyl diphosphate: step 1/1. It functions in the pathway isoprenoid biosynthesis; isopentenyl diphosphate biosynthesis via DXP pathway; isopentenyl diphosphate from 1-deoxy-D-xylulose 5-phosphate: step 6/6. Its function is as follows. Catalyzes the conversion of 1-hydroxy-2-methyl-2-(E)-butenyl 4-diphosphate (HMBPP) into a mixture of isopentenyl diphosphate (IPP) and dimethylallyl diphosphate (DMAPP). Acts in the terminal step of the DOXP/MEP pathway for isoprenoid precursor biosynthesis. The sequence is that of 4-hydroxy-3-methylbut-2-enyl diphosphate reductase 1 from Mycobacterium tuberculosis (strain CDC 1551 / Oshkosh).